The primary structure comprises 327 residues: D-alanine--D-alanine ligase (327 aa).

The ATP-grasp domain maps to 113–312; the sequence is KRLWMTYGLA…YEDFVMQVVA (200 aa). 139-194 serves as a coordination point for ATP; it reads AADLGLPLIVKPAREGSSIGLTKVTAADQMRAAFEKAAALDNDVIAETFIDGAELT. Mg(2+) contacts are provided by aspartate 266, glutamate 279, and asparagine 281.

The protein belongs to the D-alanine--D-alanine ligase family. Mg(2+) serves as cofactor. Requires Mn(2+) as cofactor.

It localises to the cytoplasm. The enzyme catalyses 2 D-alanine + ATP = D-alanyl-D-alanine + ADP + phosphate + H(+). The protein operates within cell wall biogenesis; peptidoglycan biosynthesis. Its function is as follows. Cell wall formation. The chain is D-alanine--D-alanine ligase from Cupriavidus necator (strain ATCC 17699 / DSM 428 / KCTC 22496 / NCIMB 10442 / H16 / Stanier 337) (Ralstonia eutropha).